The primary structure comprises 324 residues: Mevalonate kinase (324 aa).

An ATP-binding site is contributed by 103 to 113 (PPRAGLGSSAA). Asp-154 functions as the Proton acceptor in the catalytic mechanism.

The protein belongs to the GHMP kinase family. Mevalonate kinase subfamily. Homodimer. Requires Mg(2+) as cofactor.

It localises to the cytoplasm. It catalyses the reaction (R)-mevalonate + ATP = (R)-5-phosphomevalonate + ADP + H(+). It participates in isoprenoid biosynthesis; isopentenyl diphosphate biosynthesis via mevalonate pathway; isopentenyl diphosphate from (R)-mevalonate: step 1/3. Catalyzes the phosphorylation of (R)-mevalonate (MVA) to (R)-mevalonate 5-phosphate (MVAP). Functions in the mevalonate (MVA) pathway leading to isopentenyl diphosphate (IPP), a key precursor for the biosynthesis of isoprenoid compounds such as archaeal membrane lipids. The protein is Mevalonate kinase of Aeropyrum pernix (strain ATCC 700893 / DSM 11879 / JCM 9820 / NBRC 100138 / K1).